The sequence spans 332 residues: Geranylgeranyl diphosphate synthase (332 aa).

Isopentenyl diphosphate contacts are provided by Lys45, Arg48, and His77. 2 residues coordinate Mg(2+): Asp84 and Asp88. An all-trans-polyprenyl diphosphate is bound at residue Arg93. Arg94 is a binding site for isopentenyl diphosphate. Positions 177, 178, 215, 232, and 242 each coordinate an all-trans-polyprenyl diphosphate.

This sequence belongs to the FPP/GGPP synthase family. Requires Mg(2+) as cofactor.

The enzyme catalyses isopentenyl diphosphate + (2E,6E)-farnesyl diphosphate = (2E,6E,10E)-geranylgeranyl diphosphate + diphosphate. It functions in the pathway isoprenoid biosynthesis; geranylgeranyl diphosphate biosynthesis; geranylgeranyl diphosphate from farnesyl diphosphate and isopentenyl diphosphate: step 1/1. Catalyzes the condensation of isopentenyl pyrophosphate with the allylic pyrophosphates to yield geranylgeranyl diphosphate (GGPP) which is a precursor of the ether-linked lipids. The sequence is that of Geranylgeranyl diphosphate synthase (gds) from Saccharolobus solfataricus (strain ATCC 35092 / DSM 1617 / JCM 11322 / P2) (Sulfolobus solfataricus).